A 75-amino-acid chain; its full sequence is Peptide Ctri9610 (75 aa).

Positions 1-22 (MNSKYLFVFLILNVIFIDLCQG) are cleaved as a signal peptide. Residue lysine 41 is modified to Lysine amide. Residues 42–75 (GTRRRELGSQYDYLQDFRKRELDLDDLLSKFPDY) constitute a propeptide that is removed on maturation.

This sequence belongs to the non-disulfide-bridged peptide (NDBP) superfamily. Short antimicrobial peptide (group 4) family. In terms of tissue distribution, expressed by the venom gland.

It localises to the secreted. The polypeptide is Peptide Ctri9610 (Chaerilus tricostatus (Scorpion)).